Consider the following 495-residue polypeptide: Putative BTB/POZ domain-containing protein L98 (495 aa).

In terms of domain architecture, BTB spans 15–85 (SDLTIEFVDN…FYGIETTNDY (71 aa)).

Belongs to the mimivirus BTB/WD family.

This is Putative BTB/POZ domain-containing protein L98 from Acanthamoeba polyphaga (Amoeba).